The primary structure comprises 530 residues: Ubiquitin carboxyl-terminal hydrolase 17-like protein 13 (530 aa).

Residues 80–375 (AGLQNMGNTC…QAYVLFYIQK (296 aa)) enclose the USP domain. C89 serves as the catalytic Nucleophile. The active-site Proton acceptor is H334. 2 stretches are compositionally biased toward basic and acidic residues: residues 382–392 (SESVSRGREPR) and 398–412 (DTDR…KRDH). Disordered stretches follow at residues 382-412 (SESV…KRDH) and 477-530 (NHHP…LVCQ). Polar residues predominate over residues 493–505 (TPTHQESMNTGTL). Residues 510–524 (GRARRSKGKNKHSKR) show a composition bias toward basic residues.

Belongs to the peptidase C19 family. USP17 subfamily.

It is found in the nucleus. Its subcellular location is the endoplasmic reticulum. It catalyses the reaction Thiol-dependent hydrolysis of ester, thioester, amide, peptide and isopeptide bonds formed by the C-terminal Gly of ubiquitin (a 76-residue protein attached to proteins as an intracellular targeting signal).. Its function is as follows. Deubiquitinating enzyme that removes conjugated ubiquitin from specific proteins to regulate different cellular processes that may include cell proliferation, progression through the cell cycle, apoptosis, cell migration, and the cellular response to viral infection. This is Ubiquitin carboxyl-terminal hydrolase 17-like protein 13 (USP17L13) from Homo sapiens (Human).